The sequence spans 612 residues: Peroxisomal targeting signal receptor (612 aa).

Residue methionine 1 is modified to N-acetylmethionine. Residues 1 to 24 (MDVGSCSVGNNPLAQLHKHTQQNK) are disordered. Cysteine 6 participates in a covalent cross-link: Glycyl cysteine thioester (Cys-Gly) (interchain with G-Cter in ubiquitin). The tract at residues 7 to 29 (SVGNNPLAQLHKHTQQNKSLQFN) is amphipathic helix 1 (AH1). Residues lysine 18 and lysine 24 each participate in a glycyl lysine isopeptide (Lys-Gly) (interchain with G-Cter in ubiquitin) cross-link. Residue serine 61 is modified to Phosphoserine. The stretch at 64–97 (NMANMQRFINGEPLIDDKRRMEIGPSSGRLPPFS) is one TPR 1 repeat. Positions 70-104 (RFINGEPLIDDKRRMEIGPSSGRLPPFSNVHSLQT) are amphipathic helix 2 (AH2). Residues 120-124 (WSQEF) carry the WxxxF/Y motif 1 motif. Positions 129-151 (SIQNRNADTGNSEKAWQRGSTTA) are disordered. The amphipathic helix 3 (AH3) stretch occupies residues 158–174 (PNTMMNNYAYASMNSLS). Residues 182–202 (AFMNQQQSGRSKEGVNEQEQQ) form a disordered region. The WxxxF/Y motif 2 signature appears at 204-208 (WTDQF). The interval 257 to 273 (FQEVWDSIHKDAEEVLP) is amphipathic helix 4 (AH4). 7 TPR repeats span residues 313–346 (PNAY…KPDH), 347–380 (VDAW…DPKN), 381–418 (LEAM…IWSR), 419–456 (IKQQ…STID), 457–490 (PEIQ…NPND), 491–524 (ELMW…KPSF), and 525–558 (VRAR…HEVN).

It belongs to the peroxisomal targeting signal receptor family. Interacts (via WxxxF/Y and LVxEF motifs) with PEX14; promoting translocation through the PEX13-PEX14 docking complex. In terms of processing, monoubiquitinated at Cys-6 by PEX2 during PEX5 passage through the retrotranslocation channel: monoubiquitination acts as a signal for PEX5 extraction and is required for proper export from peroxisomes and recycling. Ubiquitination at Cys-6 is UBC4-independent but requires the presence of PEX4. When PEX5 recycling is compromised, polyubiquitinated at Lys-18 and Lys-24 by PEX10 during its passage through the retrotranslocation channel, leading to its degradation. Ubiquitination at Lys-18 and Lys-24 are UBC4-dependent. Monoubiquitination at Cys-6 and polyubiquitination at Lys-18 and Lys-24 are removed by UBP15 in the cytosol, resetting PEX5 for a subsequent import cycle.

The protein resides in the cytoplasm. It is found in the cytosol. The protein localises to the peroxisome matrix. Receptor that mediates peroxisomal import of proteins containing a C-terminal PTS1-type tripeptide peroxisomal targeting signal (SKL-type). Binds to cargo proteins containing a PTS1 peroxisomal targeting signal in the cytosol, and translocates them into the peroxisome matrix by passing through the PEX13-PEX14 docking complex along with cargo proteins. PEX5 receptor is then retrotranslocated into the cytosol, leading to release of bound cargo in the peroxisome matrix, and reset for a subsequent peroxisome import cycle. The chain is Peroxisomal targeting signal receptor from Saccharomyces cerevisiae (strain ATCC 204508 / S288c) (Baker's yeast).